Here is a 171-residue protein sequence, read N- to C-terminus: Secreted protein CSS3 (171 aa).

An N-terminal signal peptide occupies residues 1 to 20; it reads MVPLFGLFCIFSQLYSLCSA. 3 N-linked (GlcNAc...) asparagine glycosylation sites follow: Asn-37, Asn-139, and Asn-159.

Its subcellular location is the cytoplasm. It is found in the secreted. The polypeptide is Secreted protein CSS3 (Saccharomyces cerevisiae (strain ATCC 204508 / S288c) (Baker's yeast)).